Here is a 583-residue protein sequence, read N- to C-terminus: MPIAYKNINQLWAYVFTETLKRLGLAYAVICPGSRSTPLAVAFAQQAPDIEGISILDERSAAFFALGLAKATNRPVAIVCTSGTAGANFYPAVIEAQESRVPLLLLTADRPPELRDCHSGQTIDQVKLFGSYPNWQTELALPVSDMGMLGYLRQTVIHSWYRMQAPTPGPVHLNIPFRDPLAPIPDGADLSYLLTKFHPEEFFAGITDTTSLPDHSQLSIPPEWLKSQRGIIIAGVAQPQQPQEYCRAIARLSQTLQWPVLAEGLSPIRNYADLNPYLISTYDLILRNQQLATRLAPDMVIQIGDMPTSKELRTWIDTHQPRRWVIDPSDQNLDPLHGRTTHLRIRVEELGCKGVEEDKSSVSEYLQLWCNAETKVRVNVDETLDKMEDLVECKAAWLLSQILPPETPLFIANSMPVRDVEFFWKPNNLRVRSHFNRGANGIDGTLSTALGIAHRHQSSVLITGDLALLHDTNGFLIRNKFVGHLTIILINNNGGGIFEMLPIAKFEPPFEEFFGTPQDIDFAQLCTTYNVQHELIHSWVHLQQRLNPLPNTGIRVLELRTNRKIDAQWRRDNLSNFAADNII.

This sequence belongs to the TPP enzyme family. MenD subfamily. As to quaternary structure, homodimer. Mg(2+) serves as cofactor. It depends on Mn(2+) as a cofactor. Requires thiamine diphosphate as cofactor.

It catalyses the reaction isochorismate + 2-oxoglutarate + H(+) = 5-enolpyruvoyl-6-hydroxy-2-succinyl-cyclohex-3-ene-1-carboxylate + CO2. It participates in quinol/quinone metabolism; 1,4-dihydroxy-2-naphthoate biosynthesis; 1,4-dihydroxy-2-naphthoate from chorismate: step 2/7. The protein operates within cofactor biosynthesis; phylloquinone biosynthesis. Its function is as follows. Catalyzes the thiamine diphosphate-dependent decarboxylation of 2-oxoglutarate and the subsequent addition of the resulting succinic semialdehyde-thiamine pyrophosphate anion to isochorismate to yield 2-succinyl-5-enolpyruvyl-6-hydroxy-3-cyclohexene-1-carboxylate (SEPHCHC). The chain is 2-succinyl-5-enolpyruvyl-6-hydroxy-3-cyclohexene-1-carboxylate synthase from Trichormus variabilis (strain ATCC 29413 / PCC 7937) (Anabaena variabilis).